The following is a 456-amino-acid chain: Equilibrative nucleoside transporter 2 (456 aa).

Residues 1-12 (MAHGNAPRDSYH) are Cytoplasmic-facing. Residues 13–29 (LVGISFFILGLGTLLPW) traverse the membrane as a helical segment. Residues 30 to 68 (NFFITAIPYFQGRLAGTNSSAETPSTNHTSPTDTFNFNN) are Extracellular-facing. Residues asparagine 47 and asparagine 56 are each glycosylated (N-linked (GlcNAc...) asparagine). Residues 69–93 (WVTLLSQLPLLLFTLLNSFLYQCIP) form a helical membrane-spanning segment. The Cytoplasmic portion of the chain corresponds to 94-97 (ESVR). Residues 98-116 (ILGSLLAILLLFALTAALV) form a helical membrane-spanning segment. Residues 117-124 (KVDLSPGL) lie on the Extracellular side of the membrane. A helical transmembrane segment spans residues 125–143 (FFSITMASVWFINSFCAVL). The Cytoplasmic portion of the chain corresponds to 144–160 (QGSLFGQLGTMPSTYST). Residues 161-185 (LFLSGQGLAGIFAALAMLTSLASGV) form a helical membrane-spanning segment. Residues 186-192 (DPQTSAL) are Extracellular-facing. Residues 193–213 (GYFITPCVGILLSIICYLSLP) form a helical membrane-spanning segment. Over 214–291 (HLKFARYYLT…VFVVFRKIWL (78 aa)) the chain is Cytoplasmic. Residue serine 251 is modified to Phosphoserine. The helical transmembrane segment at 292 to 311 (TALCLVLVFTVTLSVFPAIT) threads the bilayer. Residues 312 to 323 (AMVTTSSNSPGK) are Extracellular-facing. The chain crosses the membrane as a helical span at residues 324–342 (WSQFFNPICCFLLFNVMDW). The Cytoplasmic segment spans residues 343–359 (LGRSLTSYFLWPDEDSQ). A helical transmembrane segment spans residues 360 to 378 (LLPLLVCLRFLFVPLFMLC). The Extracellular portion of the chain corresponds to 379–393 (HVPQRARLPIIFWQD). The helical transmembrane segment at 394–413 (AYFITFMLLFAISNGYFVSL) threads the bilayer. The Cytoplasmic segment spans residues 414–431 (TMCLAPRQVLPHEREVAG). A helical membrane pass occupies residues 432 to 452 (ALMTFFLALGLSCGASLSFLF). Residues 453–456 (KALL) lie on the Extracellular side of the membrane.

It belongs to the SLC29A/ENT transporter (TC 2.A.57) family. In terms of tissue distribution, expressed in squeletal muscles. Expressed in testis at the blood-brain-barrier.

The protein resides in the apical cell membrane. It localises to the basolateral cell membrane. The catalysed reaction is uridine(out) = uridine(in). The enzyme catalyses inosine(in) = inosine(out). It carries out the reaction adenosine(in) = adenosine(out). It catalyses the reaction thymidine(in) = thymidine(out). The catalysed reaction is hypoxanthine(out) = hypoxanthine(in). The enzyme catalyses adenine(out) = adenine(in). It carries out the reaction cytidine(in) = cytidine(out). It catalyses the reaction thymine(out) = thymine(in). The catalysed reaction is uracil(in) = uracil(out). The enzyme catalyses guanine(out) = guanine(in). It carries out the reaction guanosine(in) = guanosine(out). Functionally, bidirectional uniporter involved in the facilitative transport of nucleosides and nucleobases, and contributes to maintaining their cellular homeostasis. Functions as a Na(+)-independent, passive transporter. Involved in the transport of nucleosides such as inosine, adenosine, uridine, thymidine, cytidine and guanosine. Also able to transport purine nucleobases (hypoxanthine, adenine, guanine) and pyrimidine nucleobases (thymine, uracil). Involved in nucleoside transport at basolateral membrane of kidney cells, allowing liver absorption of nucleoside metabolites. Mediates apical nucleoside uptake into Sertoli cells, thereby regulating the transport of nucleosides in testis across the blood-testis-barrier. Mediates both the influx and efflux of hypoxanthine in skeletal muscle microvascular endothelial cells to control the amount of intracellular hypoxanthine available for xanthine oxidase-mediated ROS production. In Rattus norvegicus (Rat), this protein is Equilibrative nucleoside transporter 2.